Here is a 428-residue protein sequence, read N- to C-terminus: C4-dicarboxylate transport protein (428 aa).

8 consecutive transmembrane segments (helical) span residues 8–28, 44–64, 76–96, 142–162, 184–206, 222–242, 326–346, and 352–372; these read SLYF…HFYP, LIKM…IAGM, VALL…LIIV, IGAF…LFGF, VIFG…AMAF, LIIC…GSIA, IVHQ…AAGV, and IVLA…LALI.

The protein belongs to the dicarboxylate/amino acid:cation symporter (DAACS) (TC 2.A.23) family.

It is found in the cell inner membrane. Responsible for the transport of dicarboxylates such as succinate, fumarate, and malate from the periplasm across the membrane. The sequence is that of C4-dicarboxylate transport protein from Shigella flexneri.